We begin with the raw amino-acid sequence, 270 residues long: Interleukin-1 alpha (270 aa).

A propeptide spanning residues 1–114 (MAKVPDLFED…HDLEETIQPR (114 aa)) is cleaved from the precursor. Residue Asn64 is glycosylated (N-linked (GlcNAc...) asparagine). Lys85 is modified (N6-acetyllysine). The nuclear localization signal (NLS) stretch occupies residues 85-89 (KKRRL). Position 90 is a phosphoserine (Ser90). N-linked (GlcNAc...) asparagine glycans are attached at residues Asn139 and Asn143.

This sequence belongs to the IL-1 family. As to quaternary structure, monomer. Interacts with TMED10; the interaction mediates the translocation from the cytoplasm into the ERGIC (endoplasmic reticulum-Golgi intermediate compartment) and thereby secretion. Interacts with IL1R1. Interacts with S100A13; this interaction is the first step in the export of IL1A, followed by direct translocation of this complex across the plasma membrane. Post-translationally, acetylated within its nuclear localization sequence, which impacts subcellular localization. Proteolytic processed by CAPN1 in a calcium-dependent manner. Cleavage from 31 kDa precursor to 18 kDa biologically active molecules. In terms of processing, phosphorylated. Phosphorylation greatly enhances susceptibility to digestion and promotes the conversion of pre-IL1A alpha to the biologically active IL1A.

Its subcellular location is the nucleus. The protein localises to the cytoplasm. The protein resides in the secreted. Functionally, cytokine constitutively present intracellularly in nearly all resting non-hematopoietic cells that plays an important role in inflammation and bridges the innate and adaptive immune systems. After binding to its receptor IL1R1 together with its accessory protein IL1RAP, forms the high affinity interleukin-1 receptor complex. Signaling involves the recruitment of adapter molecules such as MYD88, IRAK1 or IRAK4. In turn, mediates the activation of NF-kappa-B and the three MAPK pathways p38, p42/p44 and JNK pathways. Within the cell, acts as an alarmin and cell death results in its liberation in the extracellular space after disruption of the cell membrane to induce inflammation and alert the host to injury or damage. In addition to its role as a danger signal, which occurs when the cytokine is passively released by cell necrosis, directly senses DNA damage and acts as a signal for genotoxic stress without loss of cell integrity. This is Interleukin-1 alpha from Mus musculus (Mouse).